We begin with the raw amino-acid sequence, 262 residues long: Acyl-[acyl-carrier-protein]--UDP-N-acetylglucosamine O-acyltransferase (262 aa).

It belongs to the transferase hexapeptide repeat family. LpxA subfamily. As to quaternary structure, homotrimer.

It localises to the cytoplasm. The enzyme catalyses a (3R)-hydroxyacyl-[ACP] + UDP-N-acetyl-alpha-D-glucosamine = a UDP-3-O-[(3R)-3-hydroxyacyl]-N-acetyl-alpha-D-glucosamine + holo-[ACP]. The protein operates within glycolipid biosynthesis; lipid IV(A) biosynthesis; lipid IV(A) from (3R)-3-hydroxytetradecanoyl-[acyl-carrier-protein] and UDP-N-acetyl-alpha-D-glucosamine: step 1/6. In terms of biological role, involved in the biosynthesis of lipid A, a phosphorylated glycolipid that anchors the lipopolysaccharide to the outer membrane of the cell. This is Acyl-[acyl-carrier-protein]--UDP-N-acetylglucosamine O-acyltransferase from Burkholderia orbicola (strain MC0-3).